Reading from the N-terminus, the 274-residue chain is Undecaprenyl-diphosphatase (274 aa).

8 consecutive transmembrane segments (helical) span residues 1 to 21 (MDWFYAIIYGIVEGITEFLPI), 48 to 68 (VVIQGGAILAVLAYYWRDFAG), 84 to 104 (LGVIVGVIPAVVLGVLFGDVI), 108 to 128 (LFRPSVVAWALIVGGVLMWVI), 143 to 163 (IGLGRAFLIGAAQCLALLWPG), 187 to 207 (FSFYLGIPTLGGAALLDFIKS), 214 to 234 (IGLLNVFLGAAVSFVVAYLAI), and 254 to 274 (VIFGLLILLLVASGRLANGGL).

This sequence belongs to the UppP family.

The protein resides in the cell membrane. It carries out the reaction di-trans,octa-cis-undecaprenyl diphosphate + H2O = di-trans,octa-cis-undecaprenyl phosphate + phosphate + H(+). Catalyzes the dephosphorylation of undecaprenyl diphosphate (UPP). Confers resistance to bacitracin. In Deinococcus geothermalis (strain DSM 11300 / CIP 105573 / AG-3a), this protein is Undecaprenyl-diphosphatase.